The primary structure comprises 78 residues: TP53-regulated inhibitor of apoptosis 1-A (78 aa).

A coiled-coil region spans residues 1–52; sequence MNSVGEECTDMKRDYDQCFNRWFAEKFLKGAGSGDPCTELFRRYRECVQKAI. The region spanning 5 to 55 is the CHCH domain; that stretch reads GEECTDMKRDYDQCFNRWFAEKFLKGAGSGDPCTELFRRYRECVQKAIKDK. 2 consecutive short sequence motifs (cx9C motif) follow at residues 8–18 and 37–47; these read CTDMKRDYDQC and CTELFRRYREC. Intrachain disulfides connect Cys-8–Cys-47 and Cys-18–Cys-37.

This sequence belongs to the TRIAP1/MDM35 family. In terms of assembly, monomer. Forms a complex with prelid1 in the mitochondrion intermembrane space. Interacts with prelid3a.

The protein resides in the mitochondrion. It is found in the mitochondrion intermembrane space. The enzyme catalyses a 1,2-diacyl-sn-glycero-3-phosphate(in) = a 1,2-diacyl-sn-glycero-3-phosphate(out). In terms of biological role, involved in the modulation of the mitochondrial apoptotic pathway by ensuring the accumulation of cardiolipin (CL) in mitochondrial membranes. The triap1:prelid1 complex probably functions as a phosphatidic acid (PA) transporter across the mitochondrion intermembrane space to provide PA for cardiolipin CL synthesis in the inner membrane. Likewise, the triap1:prelid3a complex mediates the transfer of phosphatidic acid (PA) between liposomes (in vitro) and probably functions as a PA transporter across the mitochondrion intermembrane space (in vivo). Mediates cell survival by inhibiting activation of caspase-9 which prevents induction of apoptosis. Required for pronephros development; probably involved at an early stage in the formation of pronephric components derived from the somatic layer. This chain is TP53-regulated inhibitor of apoptosis 1-A (triap1-a), found in Xenopus laevis (African clawed frog).